The sequence spans 345 residues: D-alanine--D-alanine ligase (345 aa).

The ATP-grasp domain maps to 133–332; that stretch reads KWLCHARGVK…LPHTKRAKVT (200 aa). 160–211 lines the ATP pocket; it reads AYPIIVKPSRLGSSIGVSIVKDESKLDYALDSAFEFDNTVIVEPFLEGVKEY. The Mg(2+) site is built by Asp-284, Glu-296, and Asn-298.

It belongs to the D-alanine--D-alanine ligase family. Mg(2+) serves as cofactor. The cofactor is Mn(2+).

It localises to the cytoplasm. The catalysed reaction is 2 D-alanine + ATP = D-alanyl-D-alanine + ADP + phosphate + H(+). It functions in the pathway cell wall biogenesis; peptidoglycan biosynthesis. Its function is as follows. Cell wall formation. This is D-alanine--D-alanine ligase from Sulfurimonas denitrificans (strain ATCC 33889 / DSM 1251) (Thiomicrospira denitrificans (strain ATCC 33889 / DSM 1251)).